The following is a 288-amino-acid chain: Acetyl-coenzyme A carboxylase carboxyl transferase subunit beta (288 aa).

In terms of domain architecture, CoA carboxyltransferase N-terminal spans 34 to 288 (LFAKCPGCKQ…TLLSFHGGVQ (255 aa)). Positions 38, 41, 56, and 59 each coordinate Zn(2+). The segment at 38–59 (CPGCKQAIYQKDLGQAKICPNC) adopts a C4-type zinc-finger fold.

It belongs to the AccD/PCCB family. In terms of assembly, acetyl-CoA carboxylase is a heterohexamer composed of biotin carboxyl carrier protein (AccB), biotin carboxylase (AccC) and two subunits each of ACCase subunit alpha (AccA) and ACCase subunit beta (AccD). Zn(2+) is required as a cofactor.

Its subcellular location is the cytoplasm. It carries out the reaction N(6)-carboxybiotinyl-L-lysyl-[protein] + acetyl-CoA = N(6)-biotinyl-L-lysyl-[protein] + malonyl-CoA. The protein operates within lipid metabolism; malonyl-CoA biosynthesis; malonyl-CoA from acetyl-CoA: step 1/1. Functionally, component of the acetyl coenzyme A carboxylase (ACC) complex. Biotin carboxylase (BC) catalyzes the carboxylation of biotin on its carrier protein (BCCP) and then the CO(2) group is transferred by the transcarboxylase to acetyl-CoA to form malonyl-CoA. In Streptococcus thermophilus (strain CNRZ 1066), this protein is Acetyl-coenzyme A carboxylase carboxyl transferase subunit beta.